The following is a 730-amino-acid chain: Dual function macrocyclase-peptidase POPB (730 aa).

Catalysis depends on charge relay system residues Ser577, Asp661, and His698.

Belongs to the peptidase S9A family. As to quaternary structure, monomer. In terms of tissue distribution, expressed in the pileus (cap) and lamellae where it colocalizes with amanitin.

The enzyme catalyses Hydrolysis of Pro-|-Xaa &gt;&gt; Ala-|-Xaa in oligopeptides.. Its function is as follows. Dual function macrocyclase-peptidase involved in the biosynthesis of the highly toxic amanitin toxin family of macrocycles. Cleaves peptide bonds on the C-terminal side of prolyl residues. The enzyme first removes 10 residues from the N-terminus of a 35-residue substrate. Conformational trapping of the 25 amino-acid peptide forces the enzyme to release this intermediate rather than proceed to macrocyclization. The enzyme rebinds the 25 amino-acid peptide in a different conformation and catalyzes macrocyclization of the N-terminal eight residues. The sequence is that of Dual function macrocyclase-peptidase POPB from Amanita bisporigera (Destroying angel).